The chain runs to 107 residues: Homeobox protein HD-3 (107 aa).

Positions 6 to 65 form a DNA-binding region, homeobox; the sequence is SKAPRTRMTAGQTRVLMSFFKDNPFPSTTAREKLSKVLGVGPRTVQIWFQNQRQKARGQA.

It is found in the nucleus. The protein is Homeobox protein HD-3 (HD-3) of Encephalitozoon cuniculi (strain GB-M1) (Microsporidian parasite).